The primary structure comprises 190 residues: Protein GrpE (190 aa).

Residues 1–10 (MKKHVTEEQK) show a composition bias toward basic and acidic residues. The segment at 1–42 (MKKHVTEEQKTSAAPEAEQASPESSAAEAATPEERISRLEEQ) is disordered. Residues 12–30 (SAAPEAEQASPESSAAEAA) are compositionally biased toward low complexity. Over residues 32 to 42 (PEERISRLEEQ) the composition is skewed to basic and acidic residues.

It belongs to the GrpE family. Homodimer.

Its subcellular location is the cytoplasm. Its function is as follows. Participates actively in the response to hyperosmotic and heat shock by preventing the aggregation of stress-denatured proteins, in association with DnaK and GrpE. It is the nucleotide exchange factor for DnaK and may function as a thermosensor. Unfolded proteins bind initially to DnaJ; upon interaction with the DnaJ-bound protein, DnaK hydrolyzes its bound ATP, resulting in the formation of a stable complex. GrpE releases ADP from DnaK; ATP binding to DnaK triggers the release of the substrate protein, thus completing the reaction cycle. Several rounds of ATP-dependent interactions between DnaJ, DnaK and GrpE are required for fully efficient folding. In Pelobacter propionicus (strain DSM 2379 / NBRC 103807 / OttBd1), this protein is Protein GrpE.